The following is a 943-amino-acid chain: Translation initiation factor IF-2 (943 aa).

Positions Ser30–Glu357 are disordered. 5 stretches are compositionally biased toward basic and acidic residues: residues Pro69–Ser82, Phe112–Asn137, Gln145–Asn155, Asp163–Ala196, and Arg224–Gln253. Over residues Val254–Lys266 the composition is skewed to low complexity. The span at Lys296–Lys309 shows a compositional bias: basic and acidic residues. Residues Asn313–Lys332 show a composition bias toward low complexity. A tr-type G domain is found at Glu445–Lys614. The tract at residues Gly454 to Thr461 is G1. Gly454–Thr461 serves as a coordination point for GTP. Residues Gly479–His483 form a G2 region. Residues Asp500–Gly503 are G3. Residues Asp500 to His504 and Asn554 to Asp557 contribute to the GTP site. The G4 stretch occupies residues Asn554–Asp557. The interval Ser590 to Lys592 is G5.

The protein belongs to the TRAFAC class translation factor GTPase superfamily. Classic translation factor GTPase family. IF-2 subfamily.

It localises to the cytoplasm. Functionally, one of the essential components for the initiation of protein synthesis. Protects formylmethionyl-tRNA from spontaneous hydrolysis and promotes its binding to the 30S ribosomal subunits. Also involved in the hydrolysis of GTP during the formation of the 70S ribosomal complex. In Streptococcus thermophilus (strain ATCC BAA-250 / LMG 18311), this protein is Translation initiation factor IF-2.